Reading from the N-terminus, the 275-residue chain is MWKLWGSWPEGDRVRIALIGHGPIAAHVAAHLPVGVQLTGALCRPGRDDAARAALGVSVAQALEGLPQRPDLLVDCAGHSGLRAHGLTALGAGVEVLTVSVGALADAVFCAELEDAARAGGTRLCLASGAIGALDALAAAAMGTGLQVTYTGRKPPQGWRGSRAEKVLDLKALTGPVTHFTGTARAAAQAYPKNANVAAAVALAGAGLDATRAELIADPGAAANIHEIAAEGAFGRFRFQIEGLPLPGNPRSSALTALSLLAALRQRGAAIRPSF.

2 residues coordinate NAD(+): Ala130 and Asn196. His226 is an active-site residue.

The protein belongs to the L-aspartate dehydrogenase family.

The catalysed reaction is L-aspartate + NADP(+) + H2O = oxaloacetate + NH4(+) + NADPH + H(+). The enzyme catalyses L-aspartate + NAD(+) + H2O = oxaloacetate + NH4(+) + NADH + H(+). The protein operates within cofactor biosynthesis; NAD(+) biosynthesis; iminoaspartate from L-aspartate (dehydrogenase route): step 1/1. Functionally, specifically catalyzes the NAD or NADP-dependent dehydrogenation of L-aspartate to iminoaspartate. This is L-aspartate dehydrogenase from Ruegeria pomeroyi (strain ATCC 700808 / DSM 15171 / DSS-3) (Silicibacter pomeroyi).